We begin with the raw amino-acid sequence, 74 residues long: MTLNELKDGQKAIIVNLNAHKELKNRLLSFGFIKNKNLKKIHSSLKNATIMVELDTSCVILRSDEAKTIEVNLI.

This sequence belongs to the FeoA family.

Its function is as follows. Might be involved in Fe(2+) ion uptake. In Campylobacter jejuni subsp. jejuni serotype O:2 (strain ATCC 700819 / NCTC 11168), this protein is Putative Fe(2+) transport protein A.